The following is a 124-amino-acid chain: MTKKGSSNSSKQQQQQQQIIINNNAKVDEPIIKINVNVHPNSKESSIVSFEDQILSLRISEPPIDGKANIGVIEFLSKELNIRKSNIEVGKGSKSRNKSVEIDISSENITKDELFERIKSKLNN.

The tract at residues 1-22 is disordered; the sequence is MTKKGSSNSSKQQQQQQQIIIN.

The protein belongs to the UPF0235 family.

This chain is UPF0235 protein, found in Dictyostelium discoideum (Social amoeba).